The chain runs to 485 residues: MTWLNKQVQKRPDHPAFYFQDESWTFLEVQQEVSHWVATYQQVLAPEEKRVALFSKNSKELYFSILALWELGKELLFLNTHLTLAELTFQLKDAQVKTIIGAPETQALLEEISFVDVQPMIKKQHSLSHQEFQQPSDLESVASIMYTSGTTGQPKGVLQRFKNHLASARGTQENMGITAEDCWLCAVPLFHISGLSIVVRQLVLGCSIRLYDKFDEQQVTQDLQEGRGTVISVVATMLQQLLSVYPEAGYSASFKGMLLGGGPIAPDKLAQCEEKGIPVIQSYGMTETCSQVVALKFEDAALKIGSAGQPLKDMQIKIVDELGQEQPEKQVGEILLKGPNVVSGYLNQRQPEKWTADGWFKTGDMGYLDAQSYLYLVSRLSELIISGGENIYPTEVEQVLQAITGIKAAAVVGEPDAQWGAVPVAYVISDQEITLAQIQDQCSRKLAKYKRPKRIYFCHSFPQTASGKIAKHRFMTEEREAFLIR.

The protein belongs to the ATP-dependent AMP-binding enzyme family. MenE subfamily.

The enzyme catalyses 2-succinylbenzoate + ATP + CoA = 2-succinylbenzoyl-CoA + AMP + diphosphate. Its pathway is quinol/quinone metabolism; 1,4-dihydroxy-2-naphthoate biosynthesis; 1,4-dihydroxy-2-naphthoate from chorismate: step 5/7. It functions in the pathway quinol/quinone metabolism; menaquinone biosynthesis. Its function is as follows. Converts 2-succinylbenzoate (OSB) to 2-succinylbenzoyl-CoA (OSB-CoA). This chain is 2-succinylbenzoate--CoA ligase, found in Enterococcus faecalis (strain ATCC 700802 / V583).